Reading from the N-terminus, the 455-residue chain is Chromosomal replication initiator protein DnaA (455 aa).

The domain I, interacts with DnaA modulators stretch occupies residues 1 to 82 (MNRNTSSLWA…NPDFVVKLVE (82 aa)). A domain II region spans residues 82 to 117 (EGVKPAPKQNNIVTTKQNAETAVDSEQHLQSVEFKT). The interval 118–335 (GLNSNHLFEN…GALNRVIANA (218 aa)) is domain III, AAA+ region. Glycine 163, glycine 165, lysine 166, and threonine 167 together coordinate ATP. Positions 336–455 (EFTGKTITID…WSNLIRTLSA (120 aa)) are domain IV, binds dsDNA.

The protein belongs to the DnaA family. Oligomerizes as a right-handed, spiral filament on DNA at oriC.

It localises to the cytoplasm. Functionally, plays an essential role in the initiation and regulation of chromosomal replication. ATP-DnaA binds to the origin of replication (oriC) to initiate formation of the DNA replication initiation complex once per cell cycle. Binds the DnaA box (a 9 base pair repeat at the origin) and separates the double-stranded (ds)DNA. Forms a right-handed helical filament on oriC DNA; dsDNA binds to the exterior of the filament while single-stranded (ss)DNA is stabiized in the filament's interior. The ATP-DnaA-oriC complex binds and stabilizes one strand of the AT-rich DNA unwinding element (DUE), permitting loading of DNA polymerase. After initiation quickly degrades to an ADP-DnaA complex that is not apt for DNA replication. Binds acidic phospholipids. This Actinobacillus succinogenes (strain ATCC 55618 / DSM 22257 / CCUG 43843 / 130Z) protein is Chromosomal replication initiator protein DnaA.